The sequence spans 359 residues: Glycerol-3-phosphate dehydrogenase [NAD(P)+] (359 aa).

Residues threonine 11, tryptophan 12, arginine 32, and lysine 107 each coordinate NADPH. Residues lysine 107 and glycine 138 each coordinate sn-glycerol 3-phosphate. Residue alanine 142 participates in NADPH binding. Positions 193, 246, 256, 257, and 258 each coordinate sn-glycerol 3-phosphate. The active-site Proton acceptor is the lysine 193. Residue arginine 257 coordinates NADPH. Residues valine 281 and glutamate 283 each coordinate NADPH.

The protein belongs to the NAD-dependent glycerol-3-phosphate dehydrogenase family.

The protein resides in the cytoplasm. It catalyses the reaction sn-glycerol 3-phosphate + NAD(+) = dihydroxyacetone phosphate + NADH + H(+). It carries out the reaction sn-glycerol 3-phosphate + NADP(+) = dihydroxyacetone phosphate + NADPH + H(+). The protein operates within membrane lipid metabolism; glycerophospholipid metabolism. Catalyzes the reduction of the glycolytic intermediate dihydroxyacetone phosphate (DHAP) to sn-glycerol 3-phosphate (G3P), the key precursor for phospholipid synthesis. The protein is Glycerol-3-phosphate dehydrogenase [NAD(P)+] of Dehalococcoides mccartyi (strain CBDB1).